The sequence spans 215 residues: Putative lipoprotein NMB1124/NMB1162 (215 aa).

A signal peptide spans 1–16 (MKPLILGLAAVLALSA). C17 is lipidated: N-palmitoyl cysteine. C17 is lipidated: S-diacylglycerol cysteine.

The protein localises to the cell membrane. The chain is Putative lipoprotein NMB1124/NMB1162 from Neisseria meningitidis serogroup B (strain ATCC BAA-335 / MC58).